A 132-amino-acid chain; its full sequence is Ribonuclease VapC (132 aa).

One can recognise a PINc domain in the interval 4–123; sequence YMLDTNIVIY…SNNLREFERV (120 aa). Mg(2+) is bound by residues Asp-7 and Asp-98.

The protein belongs to the PINc/VapC protein family. Probably forms a complex with cognate antitoxin VapB2. It depends on Mg(2+) as a cofactor.

Toxic component of a type II toxin-antitoxin (TA) system. Acts as an RNase. Its toxic effect is neutralized by cognate antitoxin VapB2 but not by non-cognate antitoxin VapB1. In Haemophilus influenzae (strain 86-028NP), this protein is Ribonuclease VapC.